Reading from the N-terminus, the 386-residue chain is Succinyl-diaminopimelate desuccinylase (386 aa).

His72 is a Zn(2+) binding site. Asp74 is a catalytic residue. Asp105 lines the Zn(2+) pocket. Glu139 serves as the catalytic Proton acceptor. Zn(2+)-binding residues include Glu140, Glu168, and His353.

This sequence belongs to the peptidase M20A family. DapE subfamily. Homodimer. Zn(2+) serves as cofactor. Co(2+) is required as a cofactor.

It carries out the reaction N-succinyl-(2S,6S)-2,6-diaminopimelate + H2O = (2S,6S)-2,6-diaminopimelate + succinate. It functions in the pathway amino-acid biosynthesis; L-lysine biosynthesis via DAP pathway; LL-2,6-diaminopimelate from (S)-tetrahydrodipicolinate (succinylase route): step 3/3. Catalyzes the hydrolysis of N-succinyl-L,L-diaminopimelic acid (SDAP), forming succinate and LL-2,6-diaminopimelate (DAP), an intermediate involved in the bacterial biosynthesis of lysine and meso-diaminopimelic acid, an essential component of bacterial cell walls. This Rhodospirillum centenum (strain ATCC 51521 / SW) protein is Succinyl-diaminopimelate desuccinylase.